A 384-amino-acid polypeptide reads, in one-letter code: Oxoeicosanoid receptor 1 (384 aa).

The disordered stretch occupies residues 1-21 (MELHNLSSPSPSLSSSVLPPS). Over 1 to 58 (MELHNLSSPSPSLSSSVLPPSFSPSPSSAPSAFTTVGGSSGGPCHPTSSSLVSAFLAP) the chain is Extracellular. N-linked (GlcNAc...) asparagine glycosylation occurs at Asn-5. The span at 7 to 21 (SSPSPSLSSSVLPPS) shows a compositional bias: low complexity. A helical membrane pass occupies residues 59-79 (ILALEFVLGLVGNSLALFIFC). The Cytoplasmic portion of the chain corresponds to 80 to 87 (IHTRPWTS). The chain crosses the membrane as a helical span at residues 88–108 (NTVFLVSLVAADFLLISNLPL). Over 109 to 129 (RVDYYLLHETWRFGAAACKVN) the chain is Extracellular. Cys-126 and Cys-198 are disulfide-bonded. A helical transmembrane segment spans residues 130-152 (LFMLSTNRTASVVFLTAIALNRY). Over 153–172 (LKVVQPHHVLSRASVGAAAR) the chain is Cytoplasmic. Residues 173 to 193 (VAGGLWVGILLLNGHLLLSTF) traverse the membrane as a helical segment. Topologically, residues 194–215 (SGPSCLSYRVGTKPSASLRWHQ) are extracellular. Residues 216-236 (ALYLLEFFLPLALILFAIVSI) form a helical membrane-spanning segment. Residues 237-256 (GLTIRNRGLGGQAGPQRAMR) are Cytoplasmic-facing. The helical transmembrane segment at 257 to 277 (VLAMVVAVYTICFLPSIIFGM) threads the bilayer. The Extracellular portion of the chain corresponds to 278-297 (ASMVAFWLSACRSLDLCTQL). The helical transmembrane segment at 298–318 (FHGSLAFTYLNSVLDPVLYCF) threads the bilayer. The Cytoplasmic portion of the chain corresponds to 319–384 (SSPNFLHQSR…SLEKEGSSQG (66 aa)).

This sequence belongs to the G-protein coupled receptor 1 family. In terms of tissue distribution, expressed in various tissues except brain. Expression is more intense in liver, kidney, peripheral leukocyte, lung, and spleen than in other tissues. Highly expressed in eosinophils, neutrophils, and lung macrophages.

The protein localises to the membrane. In terms of biological role, receptor for eicosanoids and polyunsaturated fatty acids such as 5-oxo-6E,8Z,11Z,14Z-eicosatetraenoic acid (5-OXO-ETE), 5(S)-hydroperoxy-6E,8Z,11Z,14Z-eicosatetraenoic acid (5(S)-HPETE) and arachidonic acid. Seems to be coupled to the G(i)/G(o), families of heteromeric G proteins. The sequence is that of Oxoeicosanoid receptor 1 (OXER1) from Homo sapiens (Human).